The sequence spans 427 residues: TNF receptor-associated factor family protein DDB_G0285149 (427 aa).

The segment at 20 to 65 (CIVCTDLLSESHDKIQVNQCPHGHCLCSDCWTKQIENKKKECPICR) adopts an RING-type zinc-finger fold. 2 TRAF-type zinc fingers span residues 122–178 (THFK…INKD) and 178–234 (DHLE…KHQA). The region spanning 284–415 (KYSNQWVIEN…GNKLTIKFEI (132 aa)) is the MATH domain.

Belongs to the TNF receptor-associated factor family. A subfamily.

It localises to the cytoplasm. Its function is as follows. Probable adapter protein and signal transducer that links members of the tumor necrosis factor receptor family to different signaling pathways by association with the receptor cytoplasmic domain and kinases. The chain is TNF receptor-associated factor family protein DDB_G0285149 from Dictyostelium discoideum (Social amoeba).